Consider the following 912-residue polypeptide: Coatomer subunit beta (912 aa).

10 HEAT repeats span residues 59–96 (PIPQ…THLG), 100–135 (SEMI…REAE), 136–172 (VLEP…HFDY), 244–281 (SERS…APTA), 300–337 (NVKM…PNID), 339–375 (CKKV…KEFD), 397–434 (EVLG…TYPS), 441–479 (KKLI…AMTS), 550–575 (LKAQ…TSKS), and 576–612 (AYER…YLKY).

In terms of assembly, oligomeric complex that consists of at least the alpha, beta, beta', gamma, delta, epsilon and zeta subunits.

Its subcellular location is the cytoplasm. The protein localises to the golgi apparatus membrane. It localises to the cytoplasmic vesicle. It is found in the COPI-coated vesicle membrane. Functionally, the coatomer is a cytosolic protein complex that binds to dilysine motifs and reversibly associates with Golgi non-clathrin-coated vesicles, which further mediate biosynthetic protein transport from the ER, via the Golgi up to the trans Golgi network. Coatomer complex is required for budding from Golgi membranes, and is essential for the retrograde Golgi-to-ER transport of dilysine-tagged proteins. The chain is Coatomer subunit beta (copb) from Dictyostelium discoideum (Social amoeba).